We begin with the raw amino-acid sequence, 102 residues long: Mini zinc finger protein 1 (102 aa).

Residues 1 to 13 (MMKKRQMVIKQRS) show a composition bias toward basic residues. The segment at 1-34 (MMKKRQMVIKQRSRNSNTSSSWTTTSSSSSSSEI) is disordered. Residues 14 to 32 (RNSNTSSSWTTTSSSSSSS) are compositionally biased toward low complexity. Residues 39–88 (YVECQKNHAANIGGYAVDGCREFMAAGVEGTVDALRCAACGCHRNFHRKE) form a ZF-HD dimerization-type; degenerate zinc finger.

As to quaternary structure, homo- and heterodimers. Interacts with ZHD1, ZHD5, ZHD6, ZHD7, ZHD8, ZHD10 and ZHD13. As to expression, mostly expressed in roots and stems, present in siliques and seedlings, and weakly observed in petioles, leaves and flowers.

The protein localises to the cytoplasm. Its function is as follows. Inhibits zinc finger homeodomain (ZHD) transcription factors, such as ZHD5, by interacting with them to prevent both their nuclear localization and their DNA-binding properties. Involved in integrating signals from multiple hormones by preventing the expression of genes involved in gibberellic acid (GA), auxin and brassinosteroid signaling and by promoting the expression of abscisic acid (ABA)-responsive genes. Regulates several development aspects, including photomorphogenesis, apical dominance, longevity, flower morphology and fertility, as well as root and stem elongation. Promotes the formation of ectopic shoot meristems on leaf margins. This is Mini zinc finger protein 1 (MIF1) from Arabidopsis thaliana (Mouse-ear cress).